A 132-amino-acid chain; its full sequence is Small ribosomal subunit protein uS8 (132 aa).

This sequence belongs to the universal ribosomal protein uS8 family. Part of the 30S ribosomal subunit. Contacts proteins S5 and S12.

One of the primary rRNA binding proteins, it binds directly to 16S rRNA central domain where it helps coordinate assembly of the platform of the 30S subunit. This Rickettsia conorii (strain ATCC VR-613 / Malish 7) protein is Small ribosomal subunit protein uS8.